The chain runs to 347 residues: tRNA pseudouridine synthase D (347 aa).

Asp81 serves as the catalytic Nucleophile. Residues 158–305 form the TRUD domain; that stretch reads GVPNYFGSQR…RHDRRDIALK (148 aa).

Belongs to the pseudouridine synthase TruD family.

It carries out the reaction uridine(13) in tRNA = pseudouridine(13) in tRNA. Functionally, responsible for synthesis of pseudouridine from uracil-13 in transfer RNAs. The protein is tRNA pseudouridine synthase D of Vibrio campbellii (strain ATCC BAA-1116).